Here is a 291-residue protein sequence, read N- to C-terminus: Serine/threonine-protein phosphatase Pgam5, mitochondrial (291 aa).

A helical transmembrane segment spans residues 7-23; that stretch reads FACGTGAGLAAFYLQRL. A disordered region spans residues 59 to 78; the sequence is KSLVRPQKNEQPQEQNRYNS. Polar residues predominate over residues 67-77; it reads NEQPQEQNRYN.

This sequence belongs to the phosphoglycerate mutase family. BPG-dependent PGAM subfamily. Interacts with Pk92B/ASK1.

It localises to the mitochondrion outer membrane. It carries out the reaction O-phospho-L-seryl-[protein] + H2O = L-seryl-[protein] + phosphate. It catalyses the reaction O-phospho-L-threonyl-[protein] + H2O = L-threonyl-[protein] + phosphate. Displays phosphatase activity for serine/threonine residues, and dephosphorylates and activates Pk92B kinase. Has apparently no phosphoglycerate mutase activity. In Drosophila willistoni (Fruit fly), this protein is Serine/threonine-protein phosphatase Pgam5, mitochondrial.